The chain runs to 691 residues: Elongation factor G (691 aa).

One can recognise a tr-type G domain in the interval 8-283 (DMQRNIGIMA…AVVDFLPSPV (276 aa)). Residues 17–24 (AHIDAGKT), 81–85 (DTPGH), and 135–138 (NKMD) contribute to the GTP site.

Belongs to the TRAFAC class translation factor GTPase superfamily. Classic translation factor GTPase family. EF-G/EF-2 subfamily.

The protein localises to the cytoplasm. In terms of biological role, catalyzes the GTP-dependent ribosomal translocation step during translation elongation. During this step, the ribosome changes from the pre-translocational (PRE) to the post-translocational (POST) state as the newly formed A-site-bound peptidyl-tRNA and P-site-bound deacylated tRNA move to the P and E sites, respectively. Catalyzes the coordinated movement of the two tRNA molecules, the mRNA and conformational changes in the ribosome. The sequence is that of Elongation factor G from Nitratidesulfovibrio vulgaris (strain ATCC 29579 / DSM 644 / CCUG 34227 / NCIMB 8303 / VKM B-1760 / Hildenborough) (Desulfovibrio vulgaris).